Consider the following 81-residue polypeptide: Large ribosomal subunit protein bL31B (81 aa).

It belongs to the bacterial ribosomal protein bL31 family. Type B subfamily. Part of the 50S ribosomal subunit.

The protein is Large ribosomal subunit protein bL31B of Bdellovibrio bacteriovorus (strain ATCC 15356 / DSM 50701 / NCIMB 9529 / HD100).